The primary structure comprises 816 residues: Lon protease (816 aa).

Residues L27–H221 form the Lon N-terminal domain. ATP is bound at residue G372–T379. The 182-residue stretch at K608–K789 folds into the Lon proteolytic domain. Active-site residues include S695 and K738. Residues P795–A816 form a disordered region. Over residues K800–R809 the composition is skewed to low complexity.

This sequence belongs to the peptidase S16 family. In terms of assembly, homohexamer. Organized in a ring with a central cavity.

Its subcellular location is the cytoplasm. It carries out the reaction Hydrolysis of proteins in presence of ATP.. In terms of biological role, ATP-dependent serine protease that mediates the selective degradation of mutant and abnormal proteins as well as certain short-lived regulatory proteins. Required for cellular homeostasis and for survival from DNA damage and developmental changes induced by stress. Degrades polypeptides processively to yield small peptide fragments that are 5 to 10 amino acids long. Binds to DNA in a double-stranded, site-specific manner. The protein is Lon protease of Trichlorobacter lovleyi (strain ATCC BAA-1151 / DSM 17278 / SZ) (Geobacter lovleyi).